We begin with the raw amino-acid sequence, 1138 residues long: MALDTPSSDLPVSTDDTAEHQPTPAHRPPSAADRRSVDLLEKIRRPRGFGAGAPKIAGTVVGVLAGIALLSSIFPLFRRLIHYPRDFIDNYIVSLPNTSLAWAFVLALVAIALSSRKRIAWWIATIYLVLFMVSNALLLVDPVATDFGVDTDERIQIWIGLGIDAAALIFLIVTYRQFYTRVRRGALFRALGVLIVGLTAATLVGWGLVWAWPGSLERTERLPYAFNRVVTFGSIDSRTFDGHHTHIVIDSALGLLGALALIAAATVLFRSQRLESLMTSDDEKLIRALITRFNDDDSLAYFSTRRDKAVVFSPDGRAAITYRVEIGVGLAGGDPIGDPESWPDAIAEFLTLCDRYGWHPAAMGSSARGAAAYDAAGFGSLSIGDEAILHTREYTISGPAMKAVRQAVTRTRRAGVTVRIRRHGEVPDDEMPQVIARADAWRDTDEERGFAMALSRLGDRADDDCLLVEAVEHAGTPEEKVIGMLSFVPWGRRGVSLDVMRRDRGSVNGVVETMVTELCRNSEQFGITEISLNFATFRAFFEQGPQIGAGPIMRLGYSVLMFGSRFFQMESLYKSNAKYLPDWQPRFLCFEDNRILPRVGLAAIVTEGFVQLPRFGRKQHYIAGQSSIPAGVDADALIAQLESEEDRTAVEVHRPEQVRVRVAKLDRLIEEGFDPYPPADAPTHTIAEAIAEPEGTQVTIAGRVTKMRDFGKVTFADVHDWSGQIQMLVEASRVIPGTPDFGSDVDLGDLVEARGVIGRSRSGELSVLIDAWRFNGKCLRPLPDKWSGLTDPEARVRQRYVDLAINPRSRELLATRSVVVKALRDFLADRGFMEVETPILQQIHGGANATPFQTHINAYNLDLYLRIAPELYLKRLCVGGVEKVFEIGRNFRNEGVDFSHNPEFTSLEAYAAHSDYLKMLDLTREMIQHAATAAHGEPVIIRVDDEGNEQRVDISGDWPVRTVHEVVSEGAGVEITSDTEVSELRGICDRLEIAYRPDWDAGQIVLELYEHLGEDRTTVPTFYTDFPTSTSPLTRAHRSKPGVAERWDLVAWGVELGTAYTELTDPVEQRKRLTAQSILAADGDPEAMELDEDFLTALEYAMPPTGGLGVGVDRVVMLITGQSIRESLAFPMVKPTDA.

Over residues 1–15 the composition is skewed to polar residues; it reads MALDTPSSDLPVSTD. The tract at residues 1 to 34 is disordered; sequence MALDTPSSDLPVSTDDTAEHQPTPAHRPPSAADR. The tract at residues 1–646 is phosphatidylglycerol lysyltransferase; it reads MALDTPSSDL…LIAQLESEED (646 aa). 6 helical membrane-spanning segments follow: residues 56–76, 92–112, 119–139, 155–175, 190–210, and 247–267; these read IAGTVVGVLAGIALLSSIFPL, IVSLPNTSLAWAFVLALVAIA, IAWWIATIYLVLFMVSNALLL, IQIWIGLGIDAAALIFLIVTY, ALGVLIVGLTAATLVGWGLVW, and IVIDSALGLLGALALIAAATV. A lysine--tRNA ligase region spans residues 647–1138; it reads RTAVEVHRPE…AFPMVKPTDA (492 aa). The segment at residues 698 to 772 is a DNA-binding region (OB); it reads VTIAGRVTKM…GELSVLIDAW (75 aa). Residues Asp1048 and Glu1055 each contribute to the Mg(2+) site.

This sequence in the N-terminal section; belongs to the LPG synthetase family. The protein in the C-terminal section; belongs to the class-II aminoacyl-tRNA synthetase family. The cofactor is Mg(2+).

Its subcellular location is the cell membrane. The enzyme catalyses tRNA(Lys) + L-lysine + ATP = L-lysyl-tRNA(Lys) + AMP + diphosphate. It catalyses the reaction L-lysyl-tRNA(Lys) + a 1,2-diacyl-sn-glycero-3-phospho-(1'-sn-glycerol) = a 1,2-diacyl-sn-glycero-3-phospho-1'-(3'-O-L-lysyl)-sn-glycerol + tRNA(Lys). Its function is as follows. Catalyzes the production of L-lysyl-tRNA(Lys)transfer and the transfer of a lysyl group from L-lysyl-tRNA(Lys) to membrane-bound phosphatidylglycerol (PG), which produces lysylphosphatidylglycerol (LPG), one of the components of the bacterial membrane with a positive net charge. LPG synthesis contributes to the resistance to cationic antimicrobial peptides (CAMPs) and likely protects M.tuberculosis against the CAMPs produced by competiting microorganisms (bacteriocins). In fact, the modification of anionic phosphatidylglycerol with positively charged L-lysine results in repulsion of the peptides. This chain is Lysylphosphatidylglycerol biosynthesis bifunctional protein LysX (lysX), found in Gordonia bronchialis (strain ATCC 25592 / DSM 43247 / BCRC 13721 / JCM 3198 / KCTC 3076 / NBRC 16047 / NCTC 10667) (Rhodococcus bronchialis).